The following is a 588-amino-acid chain: Vicilin C72 (588 aa).

A signal peptide spans 1 to 25 (MVRNKSACVVLLFSLFLSFGLLCSA). Disordered regions lie at residues 159–183 (RERE…NPFH) and 460–487 (PRQS…GQYR). Residues 163 to 175 (EEAEEEETEEGEQ) are compositionally biased toward acidic residues. 2 consecutive Cupin type-1 domains span residues 182-340 (FHFH…EQLD) and 386-566 (FNLL…RLVD). The span at 465 to 478 (FEEEEEQQQEQEQE) shows a compositional bias: acidic residues.

The protein belongs to the 7S seed storage protein family.

Its subcellular location is the vacuole. The protein resides in the aleurone grain. Its function is as follows. Seed storage protein. In Gossypium hirsutum (Upland cotton), this protein is Vicilin C72.